The sequence spans 183 residues: MTRTQKEKMLAGEMYNAADPEIQADLLAAGAWLKRYNSTLGDSAEQWHLFLREGLGEVGPGAVIRPPFHCDYGFNISIGAHAYMNFNCVILDVAKVTIGDGTAIGPAVQIYTADHPDDPEQRQAGLQLGRPVRIGKHVWIGGGAIILPGVTIGDHAVVGAGSVVTRDVPPGAKVMGSPARVRG.

The protein belongs to the transferase hexapeptide repeat family.

Its function is as follows. Acetyltransferase implicated in the O-acetylation of Nod factors. The sequence is that of Nodulation protein L (nodL) from Rhizobium meliloti (strain 1021) (Ensifer meliloti).